We begin with the raw amino-acid sequence, 445 residues long: 3-phosphoshikimate 1-carboxyvinyltransferase (445 aa).

3 residues coordinate 3-phosphoshikimate: K28, S29, and R33. Position 28 (K28) interacts with phosphoenolpyruvate. Phosphoenolpyruvate contacts are provided by G102 and R130. Residues S179, S180, Q181, E330, and H357 each coordinate 3-phosphoshikimate. Residue Q181 participates in phosphoenolpyruvate binding. The Proton acceptor role is filled by E330. Positions 361, 405, and 430 each coordinate phosphoenolpyruvate.

The protein belongs to the EPSP synthase family. Monomer.

It is found in the cytoplasm. It carries out the reaction 3-phosphoshikimate + phosphoenolpyruvate = 5-O-(1-carboxyvinyl)-3-phosphoshikimate + phosphate. Its pathway is metabolic intermediate biosynthesis; chorismate biosynthesis; chorismate from D-erythrose 4-phosphate and phosphoenolpyruvate: step 6/7. Functionally, catalyzes the transfer of the enolpyruvyl moiety of phosphoenolpyruvate (PEP) to the 5-hydroxyl of shikimate-3-phosphate (S3P) to produce enolpyruvyl shikimate-3-phosphate and inorganic phosphate. The protein is 3-phosphoshikimate 1-carboxyvinyltransferase of Bifidobacterium longum (strain DJO10A).